A 496-amino-acid polypeptide reads, in one-letter code: Cobyric acid synthase (496 aa).

The GATase cobBQ-type domain maps to threonine 250 to alanine 437. The active-site Nucleophile is the cysteine 331. The active site involves histidine 429.

The protein belongs to the CobB/CobQ family. CobQ subfamily.

Its pathway is cofactor biosynthesis; adenosylcobalamin biosynthesis. Functionally, catalyzes amidations at positions B, D, E, and G on adenosylcobyrinic A,C-diamide. NH(2) groups are provided by glutamine, and one molecule of ATP is hydrogenolyzed for each amidation. The chain is Cobyric acid synthase from Hahella chejuensis (strain KCTC 2396).